Consider the following 119-residue polypeptide: Virulence protein VsdF (119 aa).

In terms of biological role, expressed but non-essential protein, involved in the virulence of Salmonellas. The chain is Virulence protein VsdF (vsdF) from Salmonella dublin.